The primary structure comprises 118 residues: Cell division topological specificity factor (118 aa).

Residues 86–118 (RSQAKAVSSQENGASSQEAVSSQESVSTPGAME) are disordered. Low complexity predominate over residues 99–112 (ASSQEAVSSQESVS).

The protein belongs to the MinE family.

Functionally, prevents the cell division inhibition by proteins MinC and MinD at internal division sites while permitting inhibition at polar sites. This ensures cell division at the proper site by restricting the formation of a division septum at the midpoint of the long axis of the cell. The sequence is that of Cell division topological specificity factor from Prochlorococcus marinus (strain MIT 9313).